The chain runs to 372 residues: PqqA peptide cyclase (372 aa).

One can recognise a Radical SAM core domain in the interval 4–219; that stretch reads APPPLSVLLE…VDTARRELGD (216 aa). Residues Cys18, Cys22, and Cys25 each coordinate [4Fe-4S] cluster. Residues 342-372 are disordered; sequence ATAEREAAAPAPEFIYRRPERPAPATADTLE.

The protein belongs to the radical SAM superfamily. PqqE family. In terms of assembly, interacts with PqqD. The interaction is necessary for activity of PqqE. [4Fe-4S] cluster serves as cofactor.

It carries out the reaction [PQQ precursor protein] + S-adenosyl-L-methionine = E-Y cross-linked-[PQQ precursor protein] + 5'-deoxyadenosine + L-methionine + H(+). Its pathway is cofactor biosynthesis; pyrroloquinoline quinone biosynthesis. In terms of biological role, catalyzes the cross-linking of a glutamate residue and a tyrosine residue in the PqqA protein as part of the biosynthesis of pyrroloquinoline quinone (PQQ). This chain is PqqA peptide cyclase, found in Xanthomonas oryzae pv. oryzae (strain MAFF 311018).